Here is a 98-residue protein sequence, read N- to C-terminus: Acylphosphatase (98 aa).

The Acylphosphatase-like domain occupies 12-98; sequence TYYVRVRGVV…ERRFERFQQQ (87 aa). Active-site residues include R27 and N45.

Belongs to the acylphosphatase family.

It catalyses the reaction an acyl phosphate + H2O = a carboxylate + phosphate + H(+). This chain is Acylphosphatase (acyP), found in Burkholderia vietnamiensis (strain G4 / LMG 22486) (Burkholderia cepacia (strain R1808)).